The primary structure comprises 238 residues: Ribonuclease PH (238 aa).

Residues 66-88 (LPRSTHTRSDREAARGKQSGRTQ) are disordered. Residues Arg-86 and 124–126 (GTR) each bind phosphate.

It belongs to the RNase PH family. In terms of assembly, homohexameric ring arranged as a trimer of dimers.

The catalysed reaction is tRNA(n+1) + phosphate = tRNA(n) + a ribonucleoside 5'-diphosphate. Phosphorolytic 3'-5' exoribonuclease that plays an important role in tRNA 3'-end maturation. Removes nucleotide residues following the 3'-CCA terminus of tRNAs; can also add nucleotides to the ends of RNA molecules by using nucleoside diphosphates as substrates, but this may not be physiologically important. Probably plays a role in initiation of 16S rRNA degradation (leading to ribosome degradation) during starvation. The protein is Ribonuclease PH of Ralstonia pickettii (strain 12J).